The chain runs to 261 residues: Succinate dehydrogenase iron-sulfur subunit (261 aa).

The segment at 1-23 (MAELRLPPNSVVKKGKEHKEQEE) is disordered. In terms of domain architecture, 2Fe-2S ferredoxin-type spans 28–119 (RKVKIYRYDP…DIKIYPLPHM (92 aa)). Residues Cys-80, Cys-85, and Cys-100 each contribute to the [2Fe-2S] cluster site. The 31-residue stretch at 161-191 (GREKLDGLYECILCACCSTSCPSYWWNGDKY) folds into the 4Fe-4S ferredoxin-type domain. [4Fe-4S] cluster contacts are provided by Cys-171, Cys-174, and Cys-177. Residue Cys-181 coordinates [3Fe-4S] cluster. Trp-186 provides a ligand contact to a ubiquinone. Residues Cys-228 and Cys-234 each contribute to the [3Fe-4S] cluster site. A [4Fe-4S] cluster-binding site is contributed by Cys-238.

This sequence belongs to the succinate dehydrogenase/fumarate reductase iron-sulfur protein family. As to quaternary structure, part of an enzyme complex containing four subunits: a flavoprotein, an iron-sulfur, cytochrome b-556, and a hydrophobic anchor protein. It depends on [2Fe-2S] cluster as a cofactor. Requires [3Fe-4S] cluster as cofactor. [4Fe-4S] cluster is required as a cofactor.

It catalyses the reaction a quinone + succinate = fumarate + a quinol. It functions in the pathway carbohydrate metabolism; tricarboxylic acid cycle; fumarate from succinate (bacterial route): step 1/1. The protein is Succinate dehydrogenase iron-sulfur subunit (sdhB) of Rickettsia felis (strain ATCC VR-1525 / URRWXCal2) (Rickettsia azadi).